The chain runs to 636 residues: Probable potassium transport system protein Kup (636 aa).

A run of 12 helical transmembrane segments spans residues 23-43 (LVIG…LYSL), 63-83 (IISL…VVFV), 114-134 (VLMM…VITP), 150-170 (PQLS…LFLI), 182-202 (FGPV…YNLV), 217-237 (ISFL…VFLV), 260-280 (WFVL…AMLL), 298-318 (LLIP…QAVI), 350-370 (IYLP…VISF), 379-399 (AYGI…AVVM), 407-427 (PALV…FFAA), and 432-452 (VAEG…LLMT).

The protein belongs to the HAK/KUP transporter (TC 2.A.72) family.

The protein resides in the cell inner membrane. The catalysed reaction is K(+)(in) + H(+)(in) = K(+)(out) + H(+)(out). In terms of biological role, transport of potassium into the cell. Likely operates as a K(+):H(+) symporter. The protein is Probable potassium transport system protein Kup of Cupriavidus pinatubonensis (strain JMP 134 / LMG 1197) (Cupriavidus necator (strain JMP 134)).